The sequence spans 450 residues: MKTVTEFQNKNILVLGIAKSGYAAATLLQKLGANVIVNDGKPLADNVLAAELQAKGMDVVCGGHPLELLERNISLVVKNPGIPYSNPILVAAKEKEIPIVTEVELAYRISKAPFVGITGSNGKTTTTMLTFEMLKEGQKHPVIAGNIGTVACEVAQDAKENEVVVTELSSFQLMGVESFQPKIAAFLNLFEAHLDYHGTKKEYGLAKANVFKNQTENDYSVINADDADVMELSADTKGQKILFSTTKEIEDGACIKDNALYFKGEKVVEVSDIVLPGQHNLENILAAMSIAKLLGTSNEAITVVLKRFTGVKHRLEYVTTINNRKFYNDSKATNMLATEKALSAFTQPIVLLAGGLDRGNEFDDLIPYFKNVKAIVTFGQTAPKLVRAAEKAGLDIIESVDTLDEAVVKAYAHSKEDDVVLLSPACASWDQFKTFEERGDIFIQAVHKLI.

ATP is bound at residue 119–125 (GSNGKTT).

The protein belongs to the MurCDEF family.

The protein localises to the cytoplasm. The enzyme catalyses UDP-N-acetyl-alpha-D-muramoyl-L-alanine + D-glutamate + ATP = UDP-N-acetyl-alpha-D-muramoyl-L-alanyl-D-glutamate + ADP + phosphate + H(+). It functions in the pathway cell wall biogenesis; peptidoglycan biosynthesis. Its function is as follows. Cell wall formation. Catalyzes the addition of glutamate to the nucleotide precursor UDP-N-acetylmuramoyl-L-alanine (UMA). In Bacillus cereus (strain G9842), this protein is UDP-N-acetylmuramoylalanine--D-glutamate ligase.